Consider the following 461-residue polypeptide: tRNA modification GTPase MnmE (461 aa).

Residues Arg20, Glu85, and Lys124 each coordinate (6S)-5-formyl-5,6,7,8-tetrahydrofolate. One can recognise a TrmE-type G domain in the interval 221-383 (GIPVAIIGET…LQQLLTEVSS (163 aa)). Asn231 provides a ligand contact to K(+). Residues 231–236 (NAGKST), 250–256 (SDIHGTT), and 275–278 (DTAG) each bind GTP. Ser235 is a binding site for Mg(2+). K(+) is bound by residues Ser250, Ile252, and Thr255. Thr256 provides a ligand contact to Mg(2+). Position 461 (Lys461) interacts with (6S)-5-formyl-5,6,7,8-tetrahydrofolate.

It belongs to the TRAFAC class TrmE-Era-EngA-EngB-Septin-like GTPase superfamily. TrmE GTPase family. Homodimer. Heterotetramer of two MnmE and two MnmG subunits. Requires K(+) as cofactor.

The protein localises to the cytoplasm. Its function is as follows. Exhibits a very high intrinsic GTPase hydrolysis rate. Involved in the addition of a carboxymethylaminomethyl (cmnm) group at the wobble position (U34) of certain tRNAs, forming tRNA-cmnm(5)s(2)U34. This chain is tRNA modification GTPase MnmE, found in Parabacteroides distasonis (strain ATCC 8503 / DSM 20701 / CIP 104284 / JCM 5825 / NCTC 11152).